The primary structure comprises 191 residues: Imidazoleglycerol-phosphate dehydratase (191 aa).

It belongs to the imidazoleglycerol-phosphate dehydratase family.

The protein resides in the cytoplasm. It catalyses the reaction D-erythro-1-(imidazol-4-yl)glycerol 3-phosphate = 3-(imidazol-4-yl)-2-oxopropyl phosphate + H2O. It participates in amino-acid biosynthesis; L-histidine biosynthesis; L-histidine from 5-phospho-alpha-D-ribose 1-diphosphate: step 6/9. This is Imidazoleglycerol-phosphate dehydratase from Thermodesulfovibrio yellowstonii (strain ATCC 51303 / DSM 11347 / YP87).